The following is a 70-amino-acid chain: DNA-directed RNA polymerase subunit epsilon (70 aa).

Belongs to the RNA polymerase subunit epsilon family. RNAP is composed of a core of 2 alpha, a beta and a beta' subunit. The core is associated with a delta subunit, and at least one of epsilon or omega. When a sigma factor is associated with the core the holoenzyme is formed, which can initiate transcription.

The enzyme catalyses RNA(n) + a ribonucleoside 5'-triphosphate = RNA(n+1) + diphosphate. A non-essential component of RNA polymerase (RNAP). The protein is DNA-directed RNA polymerase subunit epsilon of Bacillus cereus (strain ZK / E33L).